A 238-amino-acid chain; its full sequence is NAD(P)H-hydrate epimerase (238 aa).

The YjeF N-terminal domain maps to 10 to 225 (AIKVDQILFN…ALQRQYELNL (216 aa)). Position 68 to 72 (68 to 72 (NNGGD)) interacts with (6S)-NADPHX. Positions 69 and 133 each coordinate K(+). (6S)-NADPHX is bound by residues 137–143 (GFSFKPP) and Asp-166. Position 169 (Ser-169) interacts with K(+).

Belongs to the NnrE/AIBP family. It depends on K(+) as a cofactor.

It catalyses the reaction (6R)-NADHX = (6S)-NADHX. The enzyme catalyses (6R)-NADPHX = (6S)-NADPHX. In terms of biological role, catalyzes the epimerization of the S- and R-forms of NAD(P)HX, a damaged form of NAD(P)H that is a result of enzymatic or heat-dependent hydration. This is a prerequisite for the S-specific NAD(P)H-hydrate dehydratase to allow the repair of both epimers of NAD(P)HX. This Drosophila willistoni (Fruit fly) protein is NAD(P)H-hydrate epimerase.